Reading from the N-terminus, the 307-residue chain is Ribosomal RNA small subunit methyltransferase H (307 aa).

S-adenosyl-L-methionine-binding positions include 32–34 (GGH), aspartate 52, phenylalanine 78, aspartate 99, and glutamine 106.

It belongs to the methyltransferase superfamily. RsmH family.

Its subcellular location is the cytoplasm. The enzyme catalyses cytidine(1402) in 16S rRNA + S-adenosyl-L-methionine = N(4)-methylcytidine(1402) in 16S rRNA + S-adenosyl-L-homocysteine + H(+). Its function is as follows. Specifically methylates the N4 position of cytidine in position 1402 (C1402) of 16S rRNA. In Acinetobacter baumannii (strain AB0057), this protein is Ribosomal RNA small subunit methyltransferase H.